A 109-amino-acid chain; its full sequence is Putative double-stranded DNA mimic protein YciU (109 aa).

The protein belongs to the putative dsDNA mimic protein family.

Functionally, may act as a double-stranded DNA (dsDNA) mimic. Probably regulates the activity of a dsDNA-binding protein. The chain is Putative double-stranded DNA mimic protein YciU from Escherichia coli O45:K1 (strain S88 / ExPEC).